The chain runs to 273 residues: Histidine racemase (273 aa).

Catalysis depends on C72, which acts as the Proton acceptor. The active-site Proton donor is the C211.

This sequence belongs to the histidine racemase family. Homodimer.

The protein localises to the cytoplasm. The enzyme catalyses L-histidine = D-histidine. Functionally, isomerase that catalyzes the conversion of L-histidine to D-histidine. Functions the biosynthesis of the metallophore staphylopine, which is involved in the acquisition of nickel, cobalt, zinc, copper, and iron, and thus enables bacterial growth inside the host, where metal access is limited. Therefore, this enzyme probably contributes to staphylococcal virulence. The reaction is reversible in vitro, the enzyme can produce D-histidine from the L-stereoisomer and vice versa. Appears to be specific for histidine as it cannot use other amino acids as substrate, including L-alanine and L-methionine. This is Histidine racemase from Staphylococcus aureus (strain Mu50 / ATCC 700699).